Reading from the N-terminus, the 285-residue chain is Methylamine utilization protein MauF (285 aa).

7 helical membrane-spanning segments follow: residues 39-59 (FIMM…MHST), 60-80 (MSVE…GGLL), 119-139 (YAIG…LLFA), 145-165 (YAVI…FGFL), 188-208 (VIGL…VQTP), 212-232 (IVTG…VIAV), and 265-285 (VEVD…LVML).

It localises to the cell membrane. The protein operates within one-carbon metabolism; methylamine degradation. This chain is Methylamine utilization protein MauF (mauF), found in Methylophilus methylotrophus (Bacterium W3A1).